We begin with the raw amino-acid sequence, 360 residues long: Homeobox protein ceh-60 (360 aa).

A PBC-A region spans residues 1-82 (MDNLIKQLQM…ENPTFPLEEV (82 aa)). The 179-residue stretch at 1–179 (MDNLIKQLQM…ILVLRREIEQ (179 aa)) folds into the PBC domain. A PBC-B region spans residues 85-179 (EKDEEWQPLE…ILVLRREIEQ (95 aa)). Residues 180–242 (QGRKRRNFDK…NQRIRTKQQA (63 aa)) constitute a DNA-binding region (homeobox).

The protein belongs to the TALE/PBX homeobox family. As to quaternary structure, forms a heterodimer with homeobox unc-62. Interacts with pqm-1.

It is found in the nucleus. Probable transcription regulator which binds to DNA, repressing genes involved in longevity and stress, while activating genes involved in reproduction, such as the vitellogenins. Associates with homeobox unc-62 to regulate gene expression, including repression of genes involved in innate immunity. Required for intestinal expression of vitellogenin genes. Negatively modulates longevity, probably independently of effects on vitellogenesis. Involved in lipid homeostasis, contributing to the reallocation of intestinal lipids to the germline and to the formation of the cuticle. Associates with transcriptional regulator pqm-1 at the daf-16 associated element within the promoters of stress-responsive genes to regulate expression. This is Homeobox protein ceh-60 from Caenorhabditis elegans.